Consider the following 465-residue polypeptide: Methylenetetrahydrofolate--tRNA-(uracil-5-)-methyltransferase TrmFO (465 aa).

Residue Gly3–Gly8 coordinates FAD.

The protein belongs to the MnmG family. TrmFO subfamily. FAD is required as a cofactor.

It is found in the cytoplasm. It catalyses the reaction uridine(54) in tRNA + (6R)-5,10-methylene-5,6,7,8-tetrahydrofolate + NADH + H(+) = 5-methyluridine(54) in tRNA + (6S)-5,6,7,8-tetrahydrofolate + NAD(+). It carries out the reaction uridine(54) in tRNA + (6R)-5,10-methylene-5,6,7,8-tetrahydrofolate + NADPH + H(+) = 5-methyluridine(54) in tRNA + (6S)-5,6,7,8-tetrahydrofolate + NADP(+). Catalyzes the folate-dependent formation of 5-methyl-uridine at position 54 (M-5-U54) in all tRNAs. This is Methylenetetrahydrofolate--tRNA-(uracil-5-)-methyltransferase TrmFO from Bradyrhizobium sp. (strain ORS 278).